We begin with the raw amino-acid sequence, 206 residues long: Cytochrome c oxidase assembly protein CtaG (206 aa).

Over 1-22 (MTEQPTNRNDVPRRGLGRDATV) the chain is Cytoplasmic. A helical; Signal-anchor for type II membrane protein transmembrane segment spans residues 23-43 (ASICGLVVALMVGASYAAVPF). Over 44 to 206 (YNWFCRATGF…GEPDSRKGAL (163 aa)) the chain is Periplasmic.

This sequence belongs to the COX11/CtaG family.

It is found in the cell inner membrane. Exerts its effect at some terminal stage of cytochrome c oxidase synthesis, probably by being involved in the insertion of the copper B into subunit I. This is Cytochrome c oxidase assembly protein CtaG from Rhodopseudomonas palustris (strain BisB18).